Consider the following 88-residue polypeptide: MKTALPLLLLTCLVAAVQSTGSQGCPTYVSEKCTARLQECSNNQQQEPLQNCTAVHADCVVQATEDCQREQSQLNHDHLNNHTTTQQP.

The signal sequence occupies residues methionine 1 to serine 19. 3 disulfide bridges follow: cysteine 25/cysteine 33, cysteine 40/cysteine 52, and cysteine 59/cysteine 67. The propeptide occupies arginine 69–proline 88.

In terms of assembly, binds to attractin and temptin.

The protein localises to the secreted. Functionally, a component of the complex of water-borne protein pheromones that stimulates attraction and mating behavior. The chain is Enticin from Aplysia californica (California sea hare).